A 459-amino-acid chain; its full sequence is Exodeoxyribonuclease 7 large subunit (459 aa).

The protein belongs to the XseA family. As to quaternary structure, heterooligomer composed of large and small subunits.

The protein resides in the cytoplasm. It catalyses the reaction Exonucleolytic cleavage in either 5'- to 3'- or 3'- to 5'-direction to yield nucleoside 5'-phosphates.. Functionally, bidirectionally degrades single-stranded DNA into large acid-insoluble oligonucleotides, which are then degraded further into small acid-soluble oligonucleotides. This is Exodeoxyribonuclease 7 large subunit from Pseudomonas aeruginosa (strain UCBPP-PA14).